A 293-amino-acid polypeptide reads, in one-letter code: Deubiquitinase OTUD6B (293 aa).

Residue methionine 1 is modified to N-acetylmethionine. Positions 147–284 constitute an OTU domain; that stretch reads LEIKQIPSDG…GEHYNSVTRL (138 aa). The cys-loop stretch occupies residues 152-158; it reads IPSDGHC. Aspartate 155 is an active-site residue. The active-site Nucleophile is the cysteine 158. The tract at residues 219–229 is variable-loop; that stretch reads IVNTAAWGGQL. Positions 267–277 are his-loop; it reads YMRHAYGLGEH. Histidine 277 is an active-site residue.

Interacts with the eukaryotic translation initiation factor 4F complex.

It catalyses the reaction Thiol-dependent hydrolysis of ester, thioester, amide, peptide and isopeptide bonds formed by the C-terminal Gly of ubiquitin (a 76-residue protein attached to proteins as an intracellular targeting signal).. Functionally, deubiquitinating enzyme that may play a role in the ubiquitin-dependent regulation of protein synthesis, downstream of mTORC1. May associate with the protein synthesis initiation complex and modify its ubiquitination to repress translation. May also repress DNA synthesis and modify different cellular targets thereby regulating cell growth and proliferation. May also play a role in proteasome assembly and function. In terms of biological role, stimulates protein synthesis. Influences the expression of CCND1/cyclin D1 by promoting its translation and regulates MYC/c-Myc protein stability. The polypeptide is Deubiquitinase OTUD6B (Homo sapiens (Human)).